The chain runs to 525 residues: ATP synthase subunit alpha (525 aa).

ATP is bound at residue 172–179 (GDRQTGKT).

Belongs to the ATPase alpha/beta chains family. As to quaternary structure, F-type ATPases have 2 components, CF(1) - the catalytic core - and CF(0) - the membrane proton channel. CF(1) has five subunits: alpha(3), beta(3), gamma(1), delta(1), epsilon(1). CF(0) has three main subunits: a(1), b(2) and c(9-12). The alpha and beta chains form an alternating ring which encloses part of the gamma chain. CF(1) is attached to CF(0) by a central stalk formed by the gamma and epsilon chains, while a peripheral stalk is formed by the delta and b chains.

It localises to the cell inner membrane. It carries out the reaction ATP + H2O + 4 H(+)(in) = ADP + phosphate + 5 H(+)(out). Its function is as follows. Produces ATP from ADP in the presence of a proton gradient across the membrane. The alpha chain is a regulatory subunit. The polypeptide is ATP synthase subunit alpha (Parabacteroides distasonis (strain ATCC 8503 / DSM 20701 / CIP 104284 / JCM 5825 / NCTC 11152)).